The following is a 133-amino-acid chain: Salivary cystatin-L (133 aa).

An N-terminal signal peptide occupies residues 1–19; that stretch reads MTASFALVLLLGGVAVCIA. A Cystatin domain is found at 29–115; sequence KANHQANPEY…VAQRTCTTVV (87 aa).

It belongs to the cystatin family. In terms of tissue distribution, salivary gland.

The protein localises to the secreted. Inhibitor of cysteine proteinases. Inhibits host cathepsin L (CTSL) and S (CTSS). Modulates production of various cytokines and chemokines in lipopolysaccharide (LPS)-stimulated mouse dendritic cell. Suppresses maturation of mouse bone-marrow-derived dendritic cells (BMDCs). This chain is Salivary cystatin-L, found in Ixodes persulcatus (Taiga tick).